The sequence spans 97 residues: Putative septation protein SpoVG (97 aa).

Belongs to the SpoVG family.

Functionally, could be involved in septation. The chain is Putative septation protein SpoVG from Borreliella burgdorferi (strain ATCC 35210 / DSM 4680 / CIP 102532 / B31) (Borrelia burgdorferi).